The primary structure comprises 350 residues: Ion-translocating oxidoreductase complex subunit D (350 aa).

3 helical membrane passes run 25–45 (ILCA…GTVI), 89–109 (IPPL…IVIV), and 129–149 (VMLL…SVIA). Thr185 carries the FMN phosphoryl threonine modification. 5 helical membrane-spanning segments follow: residues 212-232 (GFGV…LVML), 239-259 (WHIT…GYLL), 264-284 (FTGP…FFIA), 298-318 (LVFG…GGYP), and 319-339 (DAFA…DHYM).

The protein belongs to the NqrB/RnfD family. In terms of assembly, the complex is composed of six subunits: RnfA, RnfB, RnfC, RnfD, RnfE and RnfG. The cofactor is FMN.

Its subcellular location is the cell inner membrane. Its function is as follows. Part of a membrane-bound complex that couples electron transfer with translocation of ions across the membrane. In Shewanella sediminis (strain HAW-EB3), this protein is Ion-translocating oxidoreductase complex subunit D.